The following is a 488-amino-acid chain: Serine/threonine-protein kinase 32C (488 aa).

A disordered region spans residues methionine 1 to arginine 56. Serine 10, serine 17, and serine 18 each carry phosphoserine. The segment covering alanine 24 to proline 33 has biased composition (low complexity). Residues phenylalanine 94–leucine 354 enclose the Protein kinase domain. Residues isoleucine 100–valine 108 and lysine 123 contribute to the ATP site. Aspartate 217 acts as the Proton acceptor in catalysis. A compositionally biased stretch (basic residues) spans histidine 397 to asparagine 406. 2 disordered regions span residues histidine 397 to asparagine 420 and lysine 443 to serine 488.

It belongs to the protein kinase superfamily. Ser/Thr protein kinase family. Mg(2+) is required as a cofactor.

The catalysed reaction is L-seryl-[protein] + ATP = O-phospho-L-seryl-[protein] + ADP + H(+). It catalyses the reaction L-threonyl-[protein] + ATP = O-phospho-L-threonyl-[protein] + ADP + H(+). This chain is Serine/threonine-protein kinase 32C, found in Mus musculus (Mouse).